We begin with the raw amino-acid sequence, 171 residues long: UPF0398 protein SEQ_1788 (171 aa).

This sequence belongs to the UPF0398 family.

The protein is UPF0398 protein SEQ_1788 of Streptococcus equi subsp. equi (strain 4047).